The chain runs to 260 residues: Flagellar basal-body rod protein FlgG (260 aa).

A compositionally biased stretch (polar residues) spans 52–67 (PGSKSSEETISPSGFQ). Residues 52-71 (PGSKSSEETISPSGFQLGTG) form a disordered region.

Belongs to the flagella basal body rod proteins family. In terms of assembly, the basal body constitutes a major portion of the flagellar organelle and consists of four rings (L,P,S, and M) mounted on a central rod. The rod consists of about 26 subunits of FlgG in the distal portion, and FlgB, FlgC and FlgF are thought to build up the proximal portion of the rod with about 6 subunits each.

Its subcellular location is the bacterial flagellum basal body. The polypeptide is Flagellar basal-body rod protein FlgG (flgG) (Buchnera aphidicola subsp. Baizongia pistaciae (strain Bp)).